The chain runs to 602 residues: Proteasome-associated ATPase (602 aa).

Over residues 1–13 (MQHDLPGGRHDEA) the composition is skewed to basic and acidic residues. The segment at 1–33 (MQHDLPGGRHDEADSSETGGAGTTENPSSEQAR) is disordered. The span at 23 to 32 (TTENPSSEQA) shows a compositional bias: polar residues. The stretch at 28–103 (SSEQARQIRF…LREEVDRLAQ (76 aa)) forms a coiled coil. Residue 291-296 (GCGKTL) coordinates ATP. Positions 601–602 (YL) are docks into pockets in the proteasome alpha-ring.

This sequence belongs to the AAA ATPase family. As to quaternary structure, homohexamer. Assembles into a hexameric ring structure that caps the 20S proteasome core. Strongly interacts with the prokaryotic ubiquitin-like protein Pup through a hydrophobic interface; the interacting region of ARC lies in its N-terminal coiled-coil domain. There is one Pup binding site per ARC hexamer ring. Upon ATP-binding, the C-terminus of ARC interacts with the alpha-rings of the proteasome core, possibly by binding to the intersubunit pockets.

It functions in the pathway protein degradation; proteasomal Pup-dependent pathway. In terms of biological role, ATPase which is responsible for recognizing, binding, unfolding and translocation of pupylated proteins into the bacterial 20S proteasome core particle. May be essential for opening the gate of the 20S proteasome via an interaction with its C-terminus, thereby allowing substrate entry and access to the site of proteolysis. Thus, the C-termini of the proteasomal ATPase may function like a 'key in a lock' to induce gate opening and therefore regulate proteolysis. This chain is Proteasome-associated ATPase, found in Saccharomonospora viridis (strain ATCC 15386 / DSM 43017 / JCM 3036 / CCUG 5913 / NBRC 12207 / NCIMB 9602 / P101) (Thermoactinomyces viridis).